A 399-amino-acid chain; its full sequence is Oligoribonuclease NrnB (399 aa).

It depends on Mn(2+) as a cofactor. Co(2+) is required as a cofactor. Requires Mg(2+) as cofactor.

Its subcellular location is the cytoplasm. Its function is as follows. Degrades RNA oligonucleotides with a length of 5 nucleotides in a 3'- to 5'-direction. Less active on shorter RNA oligonucleotides and on those with a length of 24 nucleotides. Prefers RNA oligonucleotides containing adenines rather than cytosines. The polypeptide is Oligoribonuclease NrnB (nrnB) (Bacillus subtilis (strain 168)).